We begin with the raw amino-acid sequence, 40 residues long: Dolichyl-diphosphooligosaccharide--protein glycosyltransferase subunit 4 (40 aa).

The Lumenal portion of the chain corresponds to 1–4 (MITD). The helical transmembrane segment at 5 to 25 (VQLAIFSNVLGVFLFLLVVAY) threads the bilayer. At 26 to 40 (HYINANTGKIGPKAK) the chain is on the cytoplasmic side.

The protein belongs to the OST4 family. As to quaternary structure, component of the oligosaccharyltransferase (OST) complex.

Its subcellular location is the endoplasmic reticulum membrane. Subunit of the oligosaccharyl transferase (OST) complex that catalyzes the initial transfer of a defined glycan (Glc(3)Man(9)GlcNAc(2) in eukaryotes) from the lipid carrier dolichol-pyrophosphate to an asparagine residue within an Asn-X-Ser/Thr consensus motif in nascent polypeptide chains, the first step in protein N-glycosylation. N-glycosylation occurs cotranslationally and the complex associates with the Sec61 complex at the channel-forming translocon complex that mediates protein translocation across the endoplasmic reticulum (ER). All subunits are required for a maximal enzyme activity. This chain is Dolichyl-diphosphooligosaccharide--protein glycosyltransferase subunit 4, found in Drosophila willistoni (Fruit fly).